A 464-amino-acid chain; its full sequence is PH domain-containing rcdII (464 aa).

Positions 8–210 form a coiled coil; it reads KSSKEIIEDL…NTKLMSNLEI (203 aa). 2 disordered regions span residues 215 to 290 and 317 to 347; these read NFNN…NSSG and CNNNNNNNNGNSKLSTGVPITRSRSSSSNSN. Composition is skewed to low complexity over residues 234-288, 317-328, and 338-347; these read STTT…SSNS, CNNNNNNNNGNS, and RSRSSSSNSN. One can recognise a PH domain in the interval 353–461; it reads KIVKEGWLKR…WKDTISSLMP (109 aa).

This Dictyostelium discoideum (Social amoeba) protein is PH domain-containing rcdII (rcdII).